A 446-amino-acid chain; its full sequence is Bifunctional protein GlmU (446 aa).

Residues 1–226 (MLAIAILAAG…PFEIKGINDR (226 aa)) form a pyrophosphorylase region. UDP-N-acetyl-alpha-D-glucosamine is bound by residues 7–10 (LAAG), Lys-21, Gln-73, and 78–79 (GT). Asp-103 contributes to the Mg(2+) binding site. UDP-N-acetyl-alpha-D-glucosamine-binding residues include Gly-140, Glu-155, Asn-170, and Asn-224. Residue Asn-224 coordinates Mg(2+). Positions 227 to 247 (VQLSECEHYIQEELKSLWMSK) are linker. Positions 248-446 (GVSFVDPISC…SKAIIRTKAD (199 aa)) are N-acetyltransferase. UDP-N-acetyl-alpha-D-glucosamine-binding residues include Arg-329 and Lys-347. His-359 acts as the Proton acceptor in catalysis. Tyr-362 and Asn-373 together coordinate UDP-N-acetyl-alpha-D-glucosamine. Acetyl-CoA contacts are provided by Ala-376, Ala-419, and Arg-436.

The protein in the N-terminal section; belongs to the N-acetylglucosamine-1-phosphate uridyltransferase family. This sequence in the C-terminal section; belongs to the transferase hexapeptide repeat family. As to quaternary structure, homotrimer. The cofactor is Mg(2+).

It localises to the cytoplasm. The catalysed reaction is alpha-D-glucosamine 1-phosphate + acetyl-CoA = N-acetyl-alpha-D-glucosamine 1-phosphate + CoA + H(+). It carries out the reaction N-acetyl-alpha-D-glucosamine 1-phosphate + UTP + H(+) = UDP-N-acetyl-alpha-D-glucosamine + diphosphate. It functions in the pathway nucleotide-sugar biosynthesis; UDP-N-acetyl-alpha-D-glucosamine biosynthesis; N-acetyl-alpha-D-glucosamine 1-phosphate from alpha-D-glucosamine 6-phosphate (route II): step 2/2. It participates in nucleotide-sugar biosynthesis; UDP-N-acetyl-alpha-D-glucosamine biosynthesis; UDP-N-acetyl-alpha-D-glucosamine from N-acetyl-alpha-D-glucosamine 1-phosphate: step 1/1. Its pathway is bacterial outer membrane biogenesis; LPS lipid A biosynthesis. In terms of biological role, catalyzes the last two sequential reactions in the de novo biosynthetic pathway for UDP-N-acetylglucosamine (UDP-GlcNAc). The C-terminal domain catalyzes the transfer of acetyl group from acetyl coenzyme A to glucosamine-1-phosphate (GlcN-1-P) to produce N-acetylglucosamine-1-phosphate (GlcNAc-1-P), which is converted into UDP-GlcNAc by the transfer of uridine 5-monophosphate (from uridine 5-triphosphate), a reaction catalyzed by the N-terminal domain. This Prochlorococcus marinus (strain NATL2A) protein is Bifunctional protein GlmU.